A 178-amino-acid chain; its full sequence is Gamma-crystallin M1 (178 aa).

2 consecutive Beta/gamma crystallin 'Greek key' domains span residues 2–40 (GKIIFYDDRNFQGRSYDCMSDCSDISSYLSRVGSIRVES) and 41–86 (GCFM…RMIP). The segment at 87 to 91 (PYRGS) is connecting peptide. Beta/gamma crystallin 'Greek key' domains lie at 92-132 (YRMR…HVMD) and 133-175 (GHWL…RRIT).

The protein belongs to the beta/gamma-crystallin family. Monomer.

Functionally, crystallins are the dominant structural components of the vertebrate eye lens. The sequence is that of Gamma-crystallin M1 from Cyprinus carpio (Common carp).